We begin with the raw amino-acid sequence, 240 residues long: Dihydromonapterin reductase (240 aa).

The active-site Proton acceptor is Tyr-152.

This sequence belongs to the short-chain dehydrogenases/reductases (SDR) family. FolM subfamily.

It carries out the reaction (6S)-5,6,7,8-tetrahydrofolate + NADP(+) = 7,8-dihydrofolate + NADPH + H(+). The catalysed reaction is 7,8-dihydromonapterin + NADPH + H(+) = 5,6,7,8-tetrahydromonapterin + NADP(+). Its function is as follows. Catalyzes the reduction of dihydromonapterin to tetrahydromonapterin. Also has lower activity with dihydrofolate. The polypeptide is Dihydromonapterin reductase (folM) (Escherichia coli O6:H1 (strain CFT073 / ATCC 700928 / UPEC)).